A 270-amino-acid polypeptide reads, in one-letter code: Interleukin-33 (270 aa).

The homeodomain-like HTH domain stretch occupies residues 1–65 (MKPKMKYSTN…EACYFRRETT (65 aa)). The propeptide occupies 1-94 (MKPKMKYSTN…CQQQSTVECF (94 aa)). Residues 64-111 (TTKRPSLKTGRKHKRHLVLAACQQQSTVECFAFGISGVQKYTRALHDS) form an interaction with RELA region.

This sequence belongs to the IL-1 family. Highly divergent. In terms of assembly, forms a 1:1:1 heterotrimeric complex with its primary high-affinity receptor IL1RL1 and the coreceptor IL1RAP. Interacts with cargo receptor TMED10; the interaction mediates the translocation from the cytoplasm into the ERGIC (endoplasmic reticulum-Golgi intermediate compartment) and thereby secretion. (Microbial infection) Interacts (in reduced form) with H.polygyrus ARI. In terms of processing, the full-length protein can be released from cells and is able to signal via the IL1RL1/ST2 receptor. However, proteolytic processing by CELA1, CSTG/cathepsin G and ELANE/neutrophil elastase produces C-terminal peptides that are more active than the unprocessed full length protein. May also be proteolytically processed by calpains. Proteolytic cleavage mediated by apoptotic caspases including CASP3 and CASP7 results in IL33 inactivation. In vitro proteolytic cleavage by CASP1 was reported but could not be confirmed in vivo suggesting that IL33 is probably not a direct substrate for that caspase. In terms of tissue distribution, expressed at high level in high endothelial venules found in tonsils, Peyer patches and mesenteric lymph nodes. Almost undetectable in placenta.

The protein resides in the nucleus. Its subcellular location is the chromosome. It localises to the cytoplasm. It is found in the cytoplasmic vesicle. The protein localises to the secretory vesicle. The protein resides in the secreted. Cytokine that binds to and signals through the IL1RL1/ST2 receptor which in turn activates NF-kappa-B and MAPK signaling pathways in target cells. Involved in the maturation of Th2 cells inducing the secretion of T-helper type 2-associated cytokines. Also involved in activation of mast cells, basophils, eosinophils and natural killer cells. Acts as an enhancer of polarization of alternatively activated macrophages. Acts as a chemoattractant for Th2 cells, and may function as an 'alarmin', that amplifies immune responses during tissue injury. Induces rapid UCP2-dependent mitochondrial rewiring that attenuates the generation of reactive oxygen species and preserves the integrity of Krebs cycle required for persistent production of itaconate and subsequent GATA3-dependent differentiation of inflammation-resolving alternatively activated macrophages. In terms of biological role, in quiescent endothelia the uncleaved form is constitutively and abundantly expressed, and acts as a chromatin-associated nuclear factor with transcriptional repressor properties, it may sequester nuclear NF-kappaB/RELA, lowering expression of its targets. This form is rapidely lost upon angiogenic or pro-inflammatory activation. This is Interleukin-33 from Homo sapiens (Human).